Consider the following 466-residue polypeptide: Argininosuccinate lyase (466 aa).

Belongs to the lyase 1 family. Argininosuccinate lyase subfamily.

The protein localises to the cytoplasm. The enzyme catalyses 2-(N(omega)-L-arginino)succinate = fumarate + L-arginine. It participates in amino-acid biosynthesis; L-arginine biosynthesis; L-arginine from L-ornithine and carbamoyl phosphate: step 3/3. In Brucella anthropi (strain ATCC 49188 / DSM 6882 / CCUG 24695 / JCM 21032 / LMG 3331 / NBRC 15819 / NCTC 12168 / Alc 37) (Ochrobactrum anthropi), this protein is Argininosuccinate lyase.